Here is a 562-residue protein sequence, read N- to C-terminus: Apyrase (562 aa).

The first 24 residues, 1 to 24 (MAGRPGYSEVIFLYVVSVAVIARA), serve as a signal peptide directing secretion. Residues Asp-47, His-49, and Asp-98 each coordinate a divalent metal cation. Residue Asn-112 is glycosylated (N-linked (GlcNAc...) asparagine). A divalent metal cation contacts are provided by Asn-130, His-233, and His-257. Arg-370 contacts AMP. A glycan (N-linked (GlcNAc...) asparagine) is linked at Asn-390. AMP is bound by residues Arg-405, Phe-424, and Asp-514.

The protein belongs to the 5'-nucleotidase family. As to quaternary structure, (Microbial infection) Interacts with Zika virus envelope protein E and Zika virus-like particles; the interaction does not affect Zika virus replication in human endothelial cells and keratinocytes. The cofactor is a divalent metal cation. Post-translationally, the N-terminus is blocked. As to expression, female saliva (at protein level). Female salivary gland (at protein level). Not detected or low-level expression in female carcasses without salivary glands. Not detected in male tissues.

Its subcellular location is the secreted. The enzyme catalyses a ribonucleoside 5'-triphosphate + 2 H2O = a ribonucleoside 5'-phosphate + 2 phosphate + 2 H(+). Facilitates hematophagy by preventing ADP-, collagen- and thrombin-dependent platelet aggregation in the host. Cleaves adenosine triphosphate (ATP) and adenosine diphosphate (ADP) to adenosine monophosphate (AMP) and inorganic phosphate. May reduce probing time by facilitating the speed of locating blood. In terms of biological role, (Microbial infection) Does not affect Zika virus replication in human endothelial cells and keratinocytes. This is Apyrase from Aedes aegypti (Yellowfever mosquito).